The primary structure comprises 325 residues: MSQPPEHPGNPADPQGGNQGAGSYPPPGYGAPPPPPGYGPPPGTYLPPGYNAPPPPPGYGPPPGPPPPGYPTHLQSSGFSVGDAISWSWNRFTQNAVTLVVPVLAYAVALAAVIGATAGLVVALSDRATTAYTNTSGVSSESVDITMTPAAGIVMFLGYIALFALVLYMHAGILTGCLDIADGKPVTIATFFRPRNLGLVLVTGLLIVALTFIGGLLCVIPGLIFGFVAQFAVAFAVDRSTSPIDSVKASIETVGSNIGGSVLSWLAQLTAVLVGELLCFVGMLIGIPVAALIHVYTYRKLSGGQVVEAVRPAPPVGWPPGPQLA.

The tract at residues 1 to 75 (MSQPPEHPGN…PPPGYPTHLQ (75 aa)) is disordered. Pro residues predominate over residues 24 to 70 (YPPPGYGAPPPPPGYGPPPGTYLPPGYNAPPPPPGYGPPPGPPPPGY). 4 helical membrane passes run 96-116 (AVTLVVPVLAYAVALAAVIGA), 153-173 (IVMFLGYIALFALVLYMHAGI), 205-225 (LLIVALTFIGGLLCVIPGLIF), and 273-293 (LVGELLCFVGMLIGIPVAALI).

To M.tuberculosis Rv2560.

The protein resides in the cell membrane. This is an uncharacterized protein from Mycobacterium bovis (strain ATCC BAA-935 / AF2122/97).